The chain runs to 265 residues: Putative carbamate hydrolase RutD (265 aa).

Residues 21 to 123 form the AB hydrolase-1 domain; sequence PILLSAGMGG…TIVNGWARAD (103 aa).

It belongs to the AB hydrolase superfamily. Hydrolase RutD family.

The catalysed reaction is carbamate + 2 H(+) = NH4(+) + CO2. In terms of biological role, involved in pyrimidine catabolism. May facilitate the hydrolysis of carbamate, a reaction that can also occur spontaneously. The protein is Putative carbamate hydrolase RutD of Azorhizobium caulinodans (strain ATCC 43989 / DSM 5975 / JCM 20966 / LMG 6465 / NBRC 14845 / NCIMB 13405 / ORS 571).